The following is a 335-amino-acid chain: MNPVDLIIKRAYPYETEKRDRIYLALNENPFPFPKELTEEVFRKLEGDKMRIYYDSPDEELIEKILEYLDADFLRENNVSIGNGADEIIYVMMLMFERAVFFPPTYSCYRIFAKAVGAKYLEIPLTKYLKIPEVDVGEGDVVFIPNPNNPTGHVFEREEIEKILKKGAFVALDEAYYEFHGESYIDLLKEYENLAIIRTFSKAFSLAAQRIGYVISSEKFIDAYNRVRLPFNVSYVSQTFAKVALEHIDIFKERIEYIVSERERMKKALKELNYSISDSRGNFVFIFMDRKEQNKLIEQLRQKNIAVRSFREGVRITIGKREENETILKELEVFR.

Lysine 202 carries the N6-(pyridoxal phosphate)lysine modification.

It belongs to the class-II pyridoxal-phosphate-dependent aminotransferase family. Histidinol-phosphate aminotransferase subfamily. In terms of assembly, homodimer. Pyridoxal 5'-phosphate serves as cofactor.

The catalysed reaction is L-histidinol phosphate + 2-oxoglutarate = 3-(imidazol-4-yl)-2-oxopropyl phosphate + L-glutamate. Its pathway is amino-acid biosynthesis; L-histidine biosynthesis; L-histidine from 5-phospho-alpha-D-ribose 1-diphosphate: step 7/9. The protein is Histidinol-phosphate aminotransferase of Thermotoga neapolitana (strain ATCC 49049 / DSM 4359 / NBRC 107923 / NS-E).